The chain runs to 278 residues: Elongation factor Ts 2, mitochondrial (278 aa).

It belongs to the EF-Ts family.

Its subcellular location is the mitochondrion. Functionally, associates with the EF-Tu.GDP complex and induces the exchange of GDP to GTP. It remains bound to the aminoacyl-tRNA.EF-Tu.GTP complex up to the GTP hydrolysis stage on the ribosome. In Trypanosoma cruzi (strain CL Brener), this protein is Elongation factor Ts 2, mitochondrial.